The following is a 157-amino-acid chain: Thiosulfate sulfurtransferase/rhodanese-like domain-containing protein 3 (157 aa).

A Rhodanese domain is found at 52-154 (NSKDIMLIDV…WVTYEISEEK (103 aa)). Lys-96 carries the N6-succinyllysine modification. The active-site Cysteine persulfide intermediate is Cys-114.

This chain is Thiosulfate sulfurtransferase/rhodanese-like domain-containing protein 3 (Tstd3), found in Mus musculus (Mouse).